A 252-amino-acid polypeptide reads, in one-letter code: Chitooligosaccharide deacetylase (252 aa).

Mg(2+) is bound by residues His-61 and His-125.

It belongs to the YdjC deacetylase family. ChbG subfamily. Homodimer. Requires Mg(2+) as cofactor.

It localises to the cytoplasm. It carries out the reaction N,N'-diacetylchitobiose + H2O = N-acetyl-beta-D-glucosaminyl-(1-&gt;4)-D-glucosamine + acetate. The enzyme catalyses diacetylchitobiose-6'-phosphate + H2O = N'-monoacetylchitobiose-6'-phosphate + acetate. It participates in glycan degradation; chitin degradation. Functionally, involved in the degradation of chitin. ChbG is essential for growth on the acetylated chitooligosaccharides chitobiose and chitotriose but is dispensable for growth on cellobiose and chitosan dimer, the deacetylated form of chitobiose. Deacetylation of chitobiose-6-P and chitotriose-6-P is necessary for both the activation of the chb promoter by the regulatory protein ChbR and the hydrolysis of phosphorylated beta-glucosides by the phospho-beta-glucosidase ChbF. Catalyzes the removal of only one acetyl group from chitobiose-6-P to yield monoacetylchitobiose-6-P, the inducer of ChbR and the substrate of ChbF. This is Chitooligosaccharide deacetylase from Escherichia coli O45:K1 (strain S88 / ExPEC).